A 1465-amino-acid polypeptide reads, in one-letter code: DNA polymerase III PolC-type (1465 aa).

The Exonuclease domain occupies 427-583; sequence YVVFDVETTG…YDAEATGRLL (157 aa).

This sequence belongs to the DNA polymerase type-C family. PolC subfamily.

The protein localises to the cytoplasm. It catalyses the reaction DNA(n) + a 2'-deoxyribonucleoside 5'-triphosphate = DNA(n+1) + diphosphate. Its function is as follows. Required for replicative DNA synthesis. This DNA polymerase also exhibits 3' to 5' exonuclease activity. The protein is DNA polymerase III PolC-type of Streptococcus pyogenes serotype M1.